Consider the following 79-residue polypeptide: Small ribosomal subunit protein bS18 (79 aa).

This sequence belongs to the bacterial ribosomal protein bS18 family. Part of the 30S ribosomal subunit. Forms a tight heterodimer with protein bS6.

In terms of biological role, binds as a heterodimer with protein bS6 to the central domain of the 16S rRNA, where it helps stabilize the platform of the 30S subunit. The sequence is that of Small ribosomal subunit protein bS18 from Renibacterium salmoninarum (strain ATCC 33209 / DSM 20767 / JCM 11484 / NBRC 15589 / NCIMB 2235).